The chain runs to 65 residues: Protein YSY6 (65 aa).

Residues 45–65 (LGILLFLLVGGGVLQLISYIL) traverse the membrane as a helical segment.

This sequence belongs to the RAMP4 family.

The protein localises to the membrane. It localises to the endoplasmic reticulum membrane. Interacts with target proteins during their translocation into the lumen of the endoplasmic reticulum. Protects unfolded target proteins against degradation during ER stress. May facilitate glycosylation of target proteins after termination of ER stress. The protein is Protein YSY6 (YSY6) of Saccharomyces cerevisiae (strain ATCC 204508 / S288c) (Baker's yeast).